The primary structure comprises 661 residues: Bifunctional polymyxin resistance protein ArnA (661 aa).

Residues 1–304 (MKAVVFAYHD…ALGLVSGAVI (304 aa)) form a formyltransferase ArnAFT region. The active-site Proton donor; for formyltransferase activity is the H104. (6R)-10-formyltetrahydrofolate contacts are provided by residues R114 and 136 to 140 (VNRAD). Residues 314–661 (RRTRVLILGV…TVELVDDKNP (348 aa)) form a dehydrogenase ArnADH region. NAD(+) is bound by residues D347 and 368-369 (DI). UDP-alpha-D-glucuronate is bound by residues A393, Y398, and 432 to 433 (TS). E434 functions as the Proton acceptor; for decarboxylase activity in the catalytic mechanism. Residues R460, N492, 526 to 535 (KLIEGGKQKR), and Y613 contribute to the UDP-alpha-D-glucuronate site. Residue R619 is the Proton donor; for decarboxylase activity of the active site.

This sequence in the N-terminal section; belongs to the Fmt family. UDP-L-Ara4N formyltransferase subfamily. In the C-terminal section; belongs to the NAD(P)-dependent epimerase/dehydratase family. UDP-glucuronic acid decarboxylase subfamily. Homohexamer, formed by a dimer of trimers.

The catalysed reaction is UDP-alpha-D-glucuronate + NAD(+) = UDP-beta-L-threo-pentopyranos-4-ulose + CO2 + NADH. The enzyme catalyses UDP-4-amino-4-deoxy-beta-L-arabinose + (6R)-10-formyltetrahydrofolate = UDP-4-deoxy-4-formamido-beta-L-arabinose + (6S)-5,6,7,8-tetrahydrofolate + H(+). Its pathway is nucleotide-sugar biosynthesis; UDP-4-deoxy-4-formamido-beta-L-arabinose biosynthesis; UDP-4-deoxy-4-formamido-beta-L-arabinose from UDP-alpha-D-glucuronate: step 1/3. It functions in the pathway nucleotide-sugar biosynthesis; UDP-4-deoxy-4-formamido-beta-L-arabinose biosynthesis; UDP-4-deoxy-4-formamido-beta-L-arabinose from UDP-alpha-D-glucuronate: step 3/3. The protein operates within bacterial outer membrane biogenesis; lipopolysaccharide biosynthesis. Functionally, bifunctional enzyme that catalyzes the oxidative decarboxylation of UDP-glucuronic acid (UDP-GlcUA) to UDP-4-keto-arabinose (UDP-Ara4O) and the addition of a formyl group to UDP-4-amino-4-deoxy-L-arabinose (UDP-L-Ara4N) to form UDP-L-4-formamido-arabinose (UDP-L-Ara4FN). The modified arabinose is attached to lipid A and is required for resistance to polymyxin and cationic antimicrobial peptides. The polypeptide is Bifunctional polymyxin resistance protein ArnA (Klebsiella pneumoniae subsp. pneumoniae (strain ATCC 700721 / MGH 78578)).